The chain runs to 486 residues: Cobyric acid synthase (486 aa).

One can recognise a GATase cobBQ-type domain in the interval R251 to A439. C333 serves as the catalytic Nucleophile. Residue H431 is part of the active site.

This sequence belongs to the CobB/CobQ family. CobQ subfamily.

Its pathway is cofactor biosynthesis; adenosylcobalamin biosynthesis. Its function is as follows. Catalyzes amidations at positions B, D, E, and G on adenosylcobyrinic A,C-diamide. NH(2) groups are provided by glutamine, and one molecule of ATP is hydrogenolyzed for each amidation. The chain is Cobyric acid synthase from Caulobacter sp. (strain K31).